We begin with the raw amino-acid sequence, 154 residues long: Small ribosomal subunit protein uS15 (154 aa).

The segment covering 1-14 (MAPVPHRSRHKKGR) has biased composition (basic residues). Positions 1 to 24 (MAPVPHRSRHKKGRSGSVRPAHPT) are disordered.

It belongs to the universal ribosomal protein uS15 family. In terms of assembly, part of the 30S ribosomal subunit.

The polypeptide is Small ribosomal subunit protein uS15 (Pyrobaculum arsenaticum (strain DSM 13514 / JCM 11321 / PZ6)).